The primary structure comprises 599 residues: Elongation factor 4 (599 aa).

A tr-type G domain is found at 2–184 (KNIRNFSIIA…RLVRDIPPPE (183 aa)). GTP is bound by residues 14 to 19 (DHGKST) and 131 to 134 (NKID).

This sequence belongs to the TRAFAC class translation factor GTPase superfamily. Classic translation factor GTPase family. LepA subfamily.

It localises to the cell inner membrane. It carries out the reaction GTP + H2O = GDP + phosphate + H(+). Its function is as follows. Required for accurate and efficient protein synthesis under certain stress conditions. May act as a fidelity factor of the translation reaction, by catalyzing a one-codon backward translocation of tRNAs on improperly translocated ribosomes. Back-translocation proceeds from a post-translocation (POST) complex to a pre-translocation (PRE) complex, thus giving elongation factor G a second chance to translocate the tRNAs correctly. Binds to ribosomes in a GTP-dependent manner. The sequence is that of Elongation factor 4 from Shigella sonnei (strain Ss046).